A 233-amino-acid polypeptide reads, in one-letter code: Large ribosomal subunit protein uL1 (233 aa).

This sequence belongs to the universal ribosomal protein uL1 family. In terms of assembly, part of the 50S ribosomal subunit.

Functionally, binds directly to 23S rRNA. The L1 stalk is quite mobile in the ribosome, and is involved in E site tRNA release. Its function is as follows. Protein L1 is also a translational repressor protein, it controls the translation of the L11 operon by binding to its mRNA. The chain is Large ribosomal subunit protein uL1 from Proteus vulgaris.